The chain runs to 271 residues: uncharacterized protein (271 aa).

The DOD-type homing endonuclease domain occupies 77–205; that stretch reads IIGVYFGDAN…SKELLKKLDV (129 aa).

This is an uncharacterized protein from Methanocaldococcus jannaschii (strain ATCC 43067 / DSM 2661 / JAL-1 / JCM 10045 / NBRC 100440) (Methanococcus jannaschii).